Here is a 238-residue protein sequence, read N- to C-terminus: Orotidine 5'-phosphate decarboxylase (238 aa).

Substrate contacts are provided by residues D10, K32, 59-68 (DLKLHDIPNT), T122, R184, Q193, G213, and R214. The Proton donor role is filled by K61.

The protein belongs to the OMP decarboxylase family. Type 1 subfamily. In terms of assembly, homodimer.

The catalysed reaction is orotidine 5'-phosphate + H(+) = UMP + CO2. It participates in pyrimidine metabolism; UMP biosynthesis via de novo pathway; UMP from orotate: step 2/2. In terms of biological role, catalyzes the decarboxylation of orotidine 5'-monophosphate (OMP) to uridine 5'-monophosphate (UMP). In Bacillus thuringiensis subsp. konkukian (strain 97-27), this protein is Orotidine 5'-phosphate decarboxylase.